A 341-amino-acid polypeptide reads, in one-letter code: MAAKLISTGFRHTTLPENYVRPISDRPRLSEVSQLEDFPLIDLSSTDRSFLIQQIHQACARFGFFQVINHGVNKQIIDEMVSVAREFFSMSMEEKMKLYSDDPTKTTRLSTSFNVKKEEVNNWRDYLRLHCYPIHKYVNEWPSNPPSFKEIVSKYSREVREVGFKIEELISESLGLEKDYMKKVLGEQGQHMAVNYYPPCPEPELTYGLPAHTDPNALTILLQDTTVCGLQILIDGQWFAVNPHPDAFVINIGDQLQALSNGVYKSVWHRAVTNTENPRLSVASFLCPADCAVMSPAKPLWEAEDDETKPVYKDFTYAEYYKKFWSRNLDQEHCLENFLNN.

Residues 188-288 (QGQHMAVNYY…RLSVASFLCP (101 aa)) form the Fe2OG dioxygenase domain. Fe cation-binding residues include H212, D214, and H269. R279 serves as a coordination point for 2-oxoglutarate.

Belongs to the iron/ascorbate-dependent oxidoreductase family. Fe(2+) is required as a cofactor.

The catalysed reaction is salicylate + NADH + O2 + H(+) = 2,3-dihydroxybenzoate + NAD(+) + H2O. Converts salicylic acid (SA) to 2,3-dihydroxybenzoic acid (2,3-DHBA). Suppressor of immunity. Regulates negatively defense associated genes expression (e.g. PR-1, PR-2, and PR-5). Negative regulator of defense against Hyaloperonospora arabidopsidis. In terms of biological role, (Microbial infection) Required for susceptibility to the downy mildew pathogen Hyaloperonospora arabidopsidis. Its function is as follows. (Microbial infection) Required for susceptibility to Pseudomonas syringae pv. tomato DC3000. Functionally, (Microbial infection) Required for susceptibility to the oomycete Phytophthora capsici. This Arabidopsis thaliana (Mouse-ear cress) protein is Protein DOWNY MILDEW RESISTANCE 6.